The sequence spans 145 residues: Peptide methionine sulfoxide reductase MsrB (145 aa).

The region spanning 6–129 is the MsrB domain; it reads EEELKQTLTD…NAAALRFVPV (124 aa). Cys118 functions as the Nucleophile in the catalytic mechanism.

It belongs to the MsrB Met sulfoxide reductase family.

It carries out the reaction L-methionyl-[protein] + [thioredoxin]-disulfide + H2O = L-methionyl-(R)-S-oxide-[protein] + [thioredoxin]-dithiol. The chain is Peptide methionine sulfoxide reductase MsrB from Enterococcus faecalis (strain ATCC 700802 / V583).